We begin with the raw amino-acid sequence, 239 residues long: tRNA (guanine-N(7)-)-methyltransferase (239 aa).

S-adenosyl-L-methionine is bound by residues glutamate 69, glutamate 94, aspartate 121, and aspartate 144. Aspartate 144 is an active-site residue. Lysine 148 contacts substrate. The interval 150–155 is interaction with RNA; sequence RHNKRR. Residues aspartate 180 and 217–220 contribute to the substrate site; that span reads TKFE.

Belongs to the class I-like SAM-binding methyltransferase superfamily. TrmB family. Monomer.

It carries out the reaction guanosine(46) in tRNA + S-adenosyl-L-methionine = N(7)-methylguanosine(46) in tRNA + S-adenosyl-L-homocysteine. The protein operates within tRNA modification; N(7)-methylguanine-tRNA biosynthesis. Catalyzes the formation of N(7)-methylguanine at position 46 (m7G46) in tRNA. In Sodalis glossinidius (strain morsitans), this protein is tRNA (guanine-N(7)-)-methyltransferase.